Reading from the N-terminus, the 246-residue chain is MKALIIDDEPLARNELTYLLNEIGGFEEINEAENVKETLEALLINQYDIIFLDVNLMDENGIELGAKIQKMKEPPAIIFATAHDQYAVQAFELNATDYILKPFGQKRIEQAVNKVRATKAKDDNSASAIANDMSANFDQSLPVEIDDKIHMLKQQNIIGIGTHNGITTIHTTNHKYETTEPLNRYEKRLNPAYFIRIHRSYIINTKHIKEVQQWFNYTYMVILTNGVKMQVGRSFMKDFKASIGLL.

The Response regulatory domain maps to 2 to 116; it reads KALIIDDEPL…RIEQAVNKVR (115 aa). Aspartate 53 carries the 4-aspartylphosphate modification. The HTH LytTR-type domain occupies 141–245; that stretch reads LPVEIDDKIH…MKDFKASIGL (105 aa).

In terms of assembly, homodimer; when phosphorylated. Post-translationally, phosphorylated and dephosphorylated by LytS.

Its subcellular location is the cytoplasm. Functionally, member of the two-component regulatory system LytR/LytS that regulates genes involved in autolysis, programmed cell death, biofilm formation and cell wall metabolism. Also participates in sensing and responding to host defense cationic antimicrobial peptides (HDPs). Upon phosphorylation by LytS, functions as a transcription regulator by direct binding to promoter regions of target genes including lrgA and lrgB, to positively regulate their expression. The chain is Transcriptional regulatory protein LytR (lytR) from Staphylococcus aureus (strain MW2).